The sequence spans 462 residues: Bifunctional protein GlmU (462 aa).

The interval 1–230 is pyrophosphorylase; it reads MVNKNAIILA…FEESMGVNDR (230 aa). UDP-N-acetyl-alpha-D-glucosamine is bound by residues 9–12, lysine 23, glutamine 73, 78–79, 101–103, glycine 140, glutamate 155, asparagine 170, and asparagine 228; these read LAAG, GT, and SGD. Mg(2+) is bound at residue aspartate 103. A Mg(2+)-binding site is contributed by asparagine 228. The segment at 231 to 251 is linker; that stretch reads VALSQATKVMRQRINTAHMRN. The interval 252-462 is N-acetyltransferase; that stretch reads GVTLIDPEST…LPVAKDEEWQ (211 aa). Positions 333 and 351 each coordinate UDP-N-acetyl-alpha-D-glucosamine. Histidine 363 (proton acceptor) is an active-site residue. Positions 366 and 377 each coordinate UDP-N-acetyl-alpha-D-glucosamine. Acetyl-CoA contacts are provided by residues 386–387, serine 405, alanine 423, and arginine 440; that span reads NY.

It in the N-terminal section; belongs to the N-acetylglucosamine-1-phosphate uridyltransferase family. In the C-terminal section; belongs to the transferase hexapeptide repeat family. As to quaternary structure, homotrimer. Mg(2+) is required as a cofactor.

Its subcellular location is the cytoplasm. It carries out the reaction alpha-D-glucosamine 1-phosphate + acetyl-CoA = N-acetyl-alpha-D-glucosamine 1-phosphate + CoA + H(+). The catalysed reaction is N-acetyl-alpha-D-glucosamine 1-phosphate + UTP + H(+) = UDP-N-acetyl-alpha-D-glucosamine + diphosphate. Its pathway is nucleotide-sugar biosynthesis; UDP-N-acetyl-alpha-D-glucosamine biosynthesis; N-acetyl-alpha-D-glucosamine 1-phosphate from alpha-D-glucosamine 6-phosphate (route II): step 2/2. It functions in the pathway nucleotide-sugar biosynthesis; UDP-N-acetyl-alpha-D-glucosamine biosynthesis; UDP-N-acetyl-alpha-D-glucosamine from N-acetyl-alpha-D-glucosamine 1-phosphate: step 1/1. The protein operates within bacterial outer membrane biogenesis; LPS lipid A biosynthesis. In terms of biological role, catalyzes the last two sequential reactions in the de novo biosynthetic pathway for UDP-N-acetylglucosamine (UDP-GlcNAc). The C-terminal domain catalyzes the transfer of acetyl group from acetyl coenzyme A to glucosamine-1-phosphate (GlcN-1-P) to produce N-acetylglucosamine-1-phosphate (GlcNAc-1-P), which is converted into UDP-GlcNAc by the transfer of uridine 5-monophosphate (from uridine 5-triphosphate), a reaction catalyzed by the N-terminal domain. The sequence is that of Bifunctional protein GlmU from Latilactobacillus sakei subsp. sakei (strain 23K) (Lactobacillus sakei subsp. sakei).